A 318-amino-acid chain; its full sequence is tRNA pseudouridine synthase B (318 aa).

Aspartate 47 functions as the Nucleophile in the catalytic mechanism.

It belongs to the pseudouridine synthase TruB family. Type 1 subfamily.

It catalyses the reaction uridine(55) in tRNA = pseudouridine(55) in tRNA. In terms of biological role, responsible for synthesis of pseudouridine from uracil-55 in the psi GC loop of transfer RNAs. This chain is tRNA pseudouridine synthase B, found in Colwellia psychrerythraea (strain 34H / ATCC BAA-681) (Vibrio psychroerythus).